A 234-amino-acid chain; its full sequence is MLHENSPSFTVQGETSRCDQIIQKGDHALIGISPFNSRFSKDYVVDLIQWSSHYFRQVDILLPCEREASRLLVASGIDNVKAIKKTHREIRRHLRNLDYVISTATLKSKQIRVIQFSDFSLNHDYQSLKTQVENAFNESESFKKSCLDMSFQAIKGRLKGTGQYFGQIDLQLVYKALPYIFAEIPFYLNTPRLLGVKYSTLLYHRPWSIGKGLFNGSYPIQVADKQSYGIVTQL.

Serine 33 acts as the Nucleophile in catalysis. Substrate-binding positions include asparagine 36, tyrosine 179 to glutamate 183, tyrosine 203, and serine 208 to isoleucine 209.

It belongs to the CDPS family.

It carries out the reaction 2 L-leucyl-tRNA(Leu) = cyclo(L-leucyl-L-leucyl) + 2 tRNA(Leu) + 2 H(+). Its function is as follows. It uses activated amino acids in the form of aminoacyl-tRNAs (aa-tRNAs) as substrates to catalyze the ATP-independent formation of cyclodipeptides which are intermediates in diketopiperazine (DKP) biosynthetic pathways. Catalyzes the formation of cyclo(L-Leu-L-Leu) (cLL) from L-leucyl-tRNA(Leu). Can incorporate various nonpolar residues, such as L-phenylalanine, L-leucine and L-methionine, into cyclodipeptides. The polypeptide is Cyclo(L-leucyl-L-leucyl) synthase (Photorhabdus laumondii subsp. laumondii (strain DSM 15139 / CIP 105565 / TT01) (Photorhabdus luminescens subsp. laumondii)).